Here is a 245-residue protein sequence, read N- to C-terminus: 6-carboxyhexanoate--CoA ligase (245 aa).

This sequence belongs to the BioW family. In terms of assembly, homodimer. Mg(2+) serves as cofactor.

It carries out the reaction heptanedioate + ATP + CoA = 6-carboxyhexanoyl-CoA + AMP + diphosphate. It functions in the pathway metabolic intermediate metabolism; pimeloyl-CoA biosynthesis; pimeloyl-CoA from pimelate: step 1/1. In terms of biological role, catalyzes the transformation of pimelate into pimeloyl-CoA with concomitant hydrolysis of ATP to AMP. This is 6-carboxyhexanoate--CoA ligase from Sulfurihydrogenibium sp. (strain YO3AOP1).